The chain runs to 203 residues: Meiotically up-regulated protein PB17E12.09 (203 aa).

Residues 92 to 177 (CNRKIEGYIK…KEMQLYMTKI (86 aa)) are a coiled coil.

The protein localises to the cytoplasm. Has a role in meiosis and sporulation. This is Meiotically up-regulated protein PB17E12.09 from Schizosaccharomyces pombe (strain 972 / ATCC 24843) (Fission yeast).